Consider the following 333-residue polypeptide: Taste receptor type 2 member 110 (333 aa).

The Extracellular portion of the chain corresponds to 1-13 (MFSQIISTSDIFT). The helical transmembrane segment at 14–34 (FTIILFVELVIGILGNGFIAL) threads the bilayer. The Cytoplasmic segment spans residues 35–60 (VNIMDWTKRRSISSADQILTALAITR). The chain crosses the membrane as a helical span at residues 61–81 (FLYVWFMIICILLFMLCPHLL). The Extracellular segment spans residues 82–89 (TRSEIVTS). The chain crosses the membrane as a helical span at residues 90–110 (IGIIWIVNNHFSVWLATCLGV). The Cytoplasmic segment spans residues 111–133 (FYFLKIANFSNSLFLYLKWRVKK). A helical membrane pass occupies residues 134 to 154 (VVLMIIQVSMIFLILNLLSLS). Residues 155–205 (MYDQFSIDVYEGNTSYNLGDSTPFPTISLFINSSKVFVITNSSHIFLPINS) lie on the Extracellular side of the membrane. Residues Asn-186 and Asn-195 are each glycosylated (N-linked (GlcNAc...) asparagine). The chain crosses the membrane as a helical span at residues 206 to 226 (LFMLIPFTVSLVAFLMLIFSL). The Cytoplasmic portion of the chain corresponds to 227-255 (WKHHKKMQVNAKPPRDASTMAHIKALQTG). The chain crosses the membrane as a helical span at residues 256–276 (FSFLLLYAVYLLFIVIGMLSL). Residues 277-283 (RLIGGKL) are Extracellular-facing. A helical membrane pass occupies residues 284-304 (ILLFDHISGIGFPISHSFVLI). The Cytoplasmic segment spans residues 305 to 333 (LGNNKLRQASLSVLHCLRCRSKDMDTMGP).

It belongs to the G-protein coupled receptor T2R family.

It is found in the membrane. Gustducin-coupled receptor implicated in the perception of bitter compounds in the oral cavity and the gastrointestinal tract. Signals through PLCB2 and the calcium-regulated cation channel TRPM5. The sequence is that of Taste receptor type 2 member 110 from Mus musculus (Mouse).